We begin with the raw amino-acid sequence, 248 residues long: MIKATYSSAKDFYSLLSGLLRVTDEIILNFTEDSIFSRYLTDDKVLMVIFKIPKEYLEDYTIDKPLGIKININDLKKILGKAKTKSATVTLEETEAGLKVTVRDEKTGTRSNIYIKGEKTSIDQLTEPKVNLSVTFTTDGDILKDIARDLSLVGEEVEISADENTVTLSTEEAGRTYKSLLRQDKPLKSLNIESPSKAVYSIEVLKDVFKVTTISQNVTVGFGNNIPMRIEVPTDSGGQLIFWIAPRL.

It belongs to the PCNA family. In terms of assembly, homotrimer. The subunits circularize to form a toroid; DNA passes through its center. Replication factor C (RFC) is required to load the toroid on the DNA.

Sliding clamp subunit that acts as a moving platform for DNA processing. Responsible for tethering the catalytic subunit of DNA polymerase and other proteins to DNA during high-speed replication. The chain is DNA polymerase sliding clamp 2 from Sulfurisphaera ohwakuensis.